Consider the following 358-residue polypeptide: Peroxisome biogenesis protein 3-1 (358 aa).

The helical transmembrane segment at 15–32 (ILVTTTCLGSGYLLYKLY) threads the bilayer. Positions 33–62 (NAHTRKLADLERELANERENDEIIKTQMKA) form a coiled coil.

The protein belongs to the peroxin-3 family.

The protein resides in the peroxisome membrane. Involved in morphology determination of peroxisomes, but not in import of peroxisomal matrix proteins. May act as a docking factor for PEX19 and be necessary for the import of peroxisomal membrane proteins in the peroxisomes. In Arabidopsis thaliana (Mouse-ear cress), this protein is Peroxisome biogenesis protein 3-1 (PEX3-1).